Here is a 264-residue protein sequence, read N- to C-terminus: MICOS complex subunit MIC27 (264 aa).

The transit peptide at 1–27 directs the protein to the mitochondrion; that stretch reads MAALRMGKLTTMPTGLIYASISVHVAK. Over 28 to 110 the chain is Mitochondrial intermembrane; the sequence is EEESKKQLVK…YVYLKNPPRD (83 aa). The chain crosses the membrane as a helical span at residues 111–129; sequence FLPKIGVITVSGLAGFISA. The Mitochondrial matrix portion of the chain corresponds to 130–137; it reads RKGSRFKR. The helical transmembrane segment at 138 to 155 threads the bilayer; the sequence is IAYPLGLATLGATVCYPV. Residues 156-264 are Mitochondrial intermembrane-facing; it reads QSVIIAKVAG…EDIDMYSTRS (109 aa). A compositionally biased stretch (basic and acidic residues) spans 189-198; the sequence is KLPEHKEKTK. The interval 189–264 is disordered; the sequence is KLPEHKEKTK…EDIDMYSTRS (76 aa). Positions 223-238 are enriched in low complexity; the sequence is AELSSETKTKSTSGAT. Residues 245-256 are compositionally biased toward basic and acidic residues; the sequence is KLMDHGQSHPED.

Belongs to the apolipoprotein O/MICOS complex subunit Mic27 family. Component of the mitochondrial contact site and cristae organizing system (MICOS) complex, composed of at least MICOS10/MIC10, CHCHD3/MIC19, CHCHD6/MIC25, APOOL/MIC27, IMMT/MIC60, APOO/MIC23/MIC26 and QIL1/MIC13. This complex was also known under the names MINOS or MitOS complex. The MICOS complex associates with mitochondrial outer membrane proteins SAMM50, MTX1 and MTX2 (together described as components of the mitochondrial outer membrane sorting assembly machinery (SAM) complex) and DNAJC11, mitochondrial inner membrane protein TMEM11 and with HSPA9. The MICOS and SAM complexes together with DNAJC11 are part of a large protein complex spanning both membranes termed the mitochondrial intermembrane space bridging (MIB) complex. Interacts with MICOS10/MIC10, IMMT/MIC60 and APOO/MIC23/MIC26.

The protein resides in the mitochondrion inner membrane. The protein localises to the mitochondrion. Component of the MICOS complex, a large protein complex of the mitochondrial inner membrane that plays crucial roles in the maintenance of crista junctions, inner membrane architecture, and formation of contact sites to the outer membrane. Specifically binds to cardiolipin (in vitro) but not to the precursor lipid phosphatidylglycerol. Plays a crucial role in crista junction formation and mitochondrial function. The sequence is that of MICOS complex subunit MIC27 (APOL) from Bos taurus (Bovine).